A 732-amino-acid chain; its full sequence is Prolyl tripeptidyl peptidase (732 aa).

The signal sequence occupies residues 1 to 24; sequence MKKTIFQQLFLSVCALTVALPCSA. Catalysis depends on charge relay system residues Ser603, Asp678, and His710.

The protein belongs to the peptidase S9B family.

It catalyses the reaction Hydrolysis of Xaa-Xaa-Pro-|-Yaa- releasing the N-terminal tripeptide of a peptide with Pro as the third residue (position P1) and where Yaa is not proline.. Its function is as follows. Serine proteinase. Releases tripeptides from the free amino terminus of proteins. Has a requirement for Pro in the P1 position, but is inactivated by Pro in the P1' position. The protein is Prolyl tripeptidyl peptidase of Porphyromonas gingivalis (strain ATCC 33277 / DSM 20709 / CIP 103683 / JCM 12257 / NCTC 11834 / 2561).